Consider the following 392-residue polypeptide: Riboflavin biosynthesis protein PYRD, chloroplastic (392 aa).

A chloroplast-targeting transit peptide spans 1 to 26; that stretch reads MASSLVSRPHLTQRPVRAATLASATR. Positions 46-168 constitute a CMP/dCMP-type deaminase domain; sequence LDDAHYMRRC…KLQGAGISVR (123 aa). Histidine 95 lines the Zn(2+) pocket. Glutamate 97 functions as the Proton donor in the catalytic mechanism. Zn(2+)-binding residues include cysteine 120 and cysteine 129.

Requires Zn(2+) as cofactor.

It is found in the plastid. The protein localises to the chloroplast. The catalysed reaction is 2,5-diamino-6-hydroxy-4-(5-phosphoribosylamino)-pyrimidine + H2O + H(+) = 5-amino-6-(5-phospho-D-ribosylamino)uracil + NH4(+). It participates in cofactor biosynthesis; riboflavin biosynthesis; 5-amino-6-(D-ribitylamino)uracil from GTP: step 2/4. Monofunctional pyrimidine deaminase involved in the riboflavin biosynthesis pathway. Also has a reductase domain that lacks catalytically essential substrate-binding residues. The polypeptide is Riboflavin biosynthesis protein PYRD, chloroplastic (PYRD) (Zea mays (Maize)).